Consider the following 246-residue polypeptide: 5-oxoprolinase subunit A (246 aa).

Belongs to the LamB/PxpA family. Forms a complex composed of PxpA, PxpB and PxpC.

The enzyme catalyses 5-oxo-L-proline + ATP + 2 H2O = L-glutamate + ADP + phosphate + H(+). Its function is as follows. Catalyzes the cleavage of 5-oxoproline to form L-glutamate coupled to the hydrolysis of ATP to ADP and inorganic phosphate. The sequence is that of 5-oxoprolinase subunit A from Cupriavidus pinatubonensis (strain JMP 134 / LMG 1197) (Cupriavidus necator (strain JMP 134)).